Reading from the N-terminus, the 182-residue chain is Lipoprotein signal peptidase (182 aa).

A run of 3 helical transmembrane segments spans residues 21–41 (LLLS…VLAV), 74–94 (GYTW…FWMG), and 98–118 (VSPW…GNLV). Catalysis depends on residues aspartate 134 and aspartate 148. The helical transmembrane segment at 146–166 (VADPSVVGGAILLVVLSIFGY) threads the bilayer.

The protein belongs to the peptidase A8 family.

Its subcellular location is the cell membrane. It carries out the reaction Release of signal peptides from bacterial membrane prolipoproteins. Hydrolyzes -Xaa-Yaa-Zaa-|-(S,diacylglyceryl)Cys-, in which Xaa is hydrophobic (preferably Leu), and Yaa (Ala or Ser) and Zaa (Gly or Ala) have small, neutral side chains.. Its pathway is protein modification; lipoprotein biosynthesis (signal peptide cleavage). In terms of biological role, this protein specifically catalyzes the removal of signal peptides from prolipoproteins. This chain is Lipoprotein signal peptidase, found in Mycobacterium avium (strain 104).